Consider the following 145-residue polypeptide: Protein SprT-like (145 aa).

The SprT-like domain occupies Thr4–Ile140. His64 provides a ligand contact to Zn(2+). Residue Glu65 is part of the active site. Residue His68 coordinates Zn(2+).

It belongs to the SprT family. The cofactor is Zn(2+).

It localises to the cytoplasm. This Streptococcus pyogenes serotype M18 (strain MGAS8232) protein is Protein SprT-like.